Consider the following 71-residue polypeptide: UPF0346 protein SAK_1533 (71 aa).

The protein belongs to the UPF0346 family.

This is UPF0346 protein SAK_1533 from Streptococcus agalactiae serotype Ia (strain ATCC 27591 / A909 / CDC SS700).